Here is a 176-residue protein sequence, read N- to C-terminus: Pectinesterase inhibitor 1 (176 aa).

The signal sequence occupies residues 1 to 25; that stretch reads MAANLRNNAFLSSLMFLLLIGSSYA. Cystine bridges form between Cys35/Cys44 and Cys98/Cys138. An N-linked (GlcNAc...) asparagine glycan is attached at Asn154.

This sequence belongs to the PMEI family. As to quaternary structure, monomer and homodimer. Interacts in vitro with PPME1. In terms of tissue distribution, highest expression in flowers. Expressed exclusively at the pollen tube tip.

It is found in the secreted. The protein resides in the extracellular space. The protein localises to the apoplast. In terms of biological role, inhibits pectin methylesterase (PME) from flowers and siliques. Inhibits PME from leaves. The polypeptide is Pectinesterase inhibitor 1 (Arabidopsis thaliana (Mouse-ear cress)).